We begin with the raw amino-acid sequence, 539 residues long: Phosphoenolpyruvate carboxykinase (ATP) (539 aa).

Substrate-binding residues include R64, Y206, and K212. ATP contacts are provided by residues K212, H231, and 247-255; that span reads GLSGTGKTT. Residues K212 and H231 each coordinate Mn(2+). D268 is a Mn(2+) binding site. ATP is bound by residues E296, R332, 448–449, and T454; that span reads RI. R332 is a binding site for substrate.

It belongs to the phosphoenolpyruvate carboxykinase (ATP) family. In terms of assembly, monomer. Mn(2+) serves as cofactor.

It is found in the cytoplasm. The catalysed reaction is oxaloacetate + ATP = phosphoenolpyruvate + ADP + CO2. It functions in the pathway carbohydrate biosynthesis; gluconeogenesis. In terms of biological role, involved in the gluconeogenesis. Catalyzes the conversion of oxaloacetate (OAA) to phosphoenolpyruvate (PEP) through direct phosphoryl transfer between the nucleoside triphosphate and OAA. This is Phosphoenolpyruvate carboxykinase (ATP) from Pectobacterium atrosepticum (strain SCRI 1043 / ATCC BAA-672) (Erwinia carotovora subsp. atroseptica).